Here is a 406-residue protein sequence, read N- to C-terminus: O-glycosyltransferase PaGT (406 aa).

The disordered stretch occupies residues M1 to D26.

It belongs to the afumC glycosyltransferase family.

Its pathway is mycotoxin biosynthesis. In terms of biological role, O-glycosyltransferase; part of the 2 gene clusters that mediate the biosynthesis of fusicoccins, diterpene glucosides that display phytohormone-like activity and function as potent activators of plasma membrane H(+)-ATPases in plants by modifying 14-3-3 proteins and cause the plant disease constriction canker. The first step in the pathway is performed by the fusicoccadiene synthase PaFS that possesses both prenyl transferase and terpene cyclase activity, converting isopentenyl diphosphate and dimethylallyl diphosphate into geranylgeranyl diphosphate (GGDP) and successively converting GGDP into fusicocca-2,10(14)-diene, a precursor for fusicoccin H. The second step is the oxidation at the C-8 position by the cytochrome P450 monooxygenase PaP450-2 to yield fusicocca-2,10(14)-diene-8-beta-ol. The cytochrome P450 monooxygenase PaP450-1 then catalyzes the hydroxylation at the C-16 position to produce fusicocca-2,10(14)-diene-8-beta,16-diol. The dioxygenase fc-dox then catalyzes the 16-oxydation of fusicocca-2,10(14)-diene-8-beta,16-diol to yield an aldehyde (8-beta-hydroxyfusicocca-1,10(14)-dien-16-al). The short-chain dehydrogenase/reductase fc-sdr catalyzes the reduction of the aldehyde to yield fusicocca-1,10(14)-diene-8-beta,16-diol. The next step is the hydroxylation at C-9 performed by the cytochrome P450 monooxygenase PaP450-3 that leads to fusicoccin H aglycon which is glycosylated to fusicoccin H by the O-glycosyltransferase PaGT. Hydroxylation at C-12 by the cytochrome P450 monooxygenase PaP450-4 leads then to the production of fusicoccin Q and is followed by methylation by the O-methyltransferase PaMT to yield fusicoccin P. Fusicoccin P is further converted to fusicoccin J via prenylation by the O-glucose prenyltransferase PaPT. Cytochrome P450 monooxygenase PaP450-5 then performs hydroxylation at C-19 to yield dideacetyl-fusicoccin A which is acetylated to 3'-O-deacetyl-fusicoccin A by the O-acetyltransferase PaAT-2. Finally, a another acetylation by the O-acetyltransferase PaAT-1 yields fusicoccin A. In Phomopsis amygdali (Fusicoccum amygdali), this protein is O-glycosyltransferase PaGT.